The following is a 240-amino-acid chain: RING finger protein 151 (240 aa).

The segment at 20–58 (CSVCHGVLKRPVRLPCSHIFCKKCILRWLARQKTCPCCR) adopts an RING-type zinc-finger fold. A TRAF-type zinc finger spans residues 101–156 (GHQDSCPFELMVCPNEGCMLRVPRGALDEHRQNCQHGAYHRCSLGCGATLGPVERA).

The chain is RING finger protein 151 (RNF151) from Bos taurus (Bovine).